The chain runs to 1288 residues: Peroxidasin homolog (1288 aa).

The N-terminal stretch at 1–16 is a signal peptide; the sequence is MNLLLYLLLLVPWVLG. Positions 17–51 constitute an LRRNT domain; that stretch reads SEDGCPAKCTCDKKGFTVDCSNAGLTRIPKGISSN. LRR repeat units lie at residues 27 to 49, 50 to 72, 73 to 96, 97 to 120, 122 to 143, 145 to 168, and 204 to 227; these read CDKK…KGIS, SNVR…DLEG, FPLL…ILDH, LPEL…ASES, PLAS…WLLQ, FPEL…LFEN, and AYCT…LLKC. The LRRCT domain occupies 180 to 228; that stretch reads NPWNCDCRVTKVKALLRKVEWERKAYCTNPVELRHQAIDEVEESLLKCA. The N-linked (GlcNAc...) asparagine glycan is linked to asparagine 247. The interval 304-323 is disordered; it reads LRQSHHSNGAPQFTYKPRDN. Ig-like C2-type domains follow at residues 314 to 400 and 407 to 494; these read PQFT…FSLD and PNIY…AKLT. A disulfide bond links cysteine 335 and cysteine 384. LRR repeat units lie at residues 356–381 and 387–412; these read SSRK…DSGR and VNSL…IYEG. Cysteine 428 and cysteine 478 are disulfide-bonded. N-linked (GlcNAc...) asparagine glycosylation occurs at asparagine 594. Cysteine 624 and cysteine 640 are oxidised to a cystine. Residue aspartate 718 coordinates heme b. The active-site Proton acceptor is histidine 719. Aspartate 720 contributes to the Ca(2+) binding site. Disulfide bonds link cysteine 739–cysteine 749 and cysteine 743–cysteine 770. The N-linked (GlcNAc...) asparagine glycan is linked to asparagine 740. Residues threonine 802, phenylalanine 804, aspartate 806, and serine 808 each contribute to the Ca(2+) site. Asparagine 857 is a glycosylation site (N-linked (GlcNAc...) asparagine). 2 residues coordinate heme b: glutamate 876 and histidine 972. 2 LRR repeats span residues 998–1022 and 1049–1073; these read KAFF…LFAS and SLDL…EYRQ. 2 disulfide bridges follow: cysteine 1075–cysteine 1132 and cysteine 1173–cysteine 1200. An LRR 12 repeat occupies 1168-1189; that stretch reads LARLLCDNGDEIDRIQKDVFMY.

Belongs to the peroxidase family. XPO subfamily. It depends on Ca(2+) as a cofactor. Heme b is required as a cofactor.

It localises to the secreted. It is found in the extracellular space. Its subcellular location is the extracellular matrix. It catalyses the reaction L-lysyl-[collagen] + L-methionyl-[collagen] + H2O2 = [collagen]-L-lysyl-N-S-L-methionyl-[collagen] + 2 H2O + H(+). It carries out the reaction bromide + H2O2 = hypobromite + H2O. The catalysed reaction is L-lysyl-[collagen] + L-methionyl-[collagen] + hypobromite = [collagen]-L-lysyl-N-S-L-methionyl-[collagen] + bromide + H2O + H(+). The enzyme catalyses L-tyrosyl-[protein] + bromide + H2O2 + H(+) = 3-bromo-L-tyrosyl-[protein] + 2 H2O. It catalyses the reaction hypobromite + L-tyrosyl-[protein] + H(+) = 3-bromo-L-tyrosyl-[protein] + H2O. In terms of biological role, catalyzes the two-electron oxidation of bromide by hydrogen peroxide and generates hypobromite as a reactive intermediate which mediates the formation of sulfilimine cross-links between methionine and hydroxylysine residues within an uncross-linked collagen IV NC1 hexamer. Plays a role in the attachment of tissues and in axonal guidance during early developmental stages. May functionally antagonize the peroxidasin pxn-2 to maintain neuronal development. This Caenorhabditis briggsae protein is Peroxidasin homolog.